A 683-amino-acid polypeptide reads, in one-letter code: Methionine--tRNA ligase (683 aa).

The 'HIGH' region motif lies at P15–H25. Residues C146, C149, C159, and C162 each contribute to the Zn(2+) site. The 'KMSKS' region motif lies at K332 to S336. K335 serves as a coordination point for ATP. Residues D581–K683 enclose the tRNA-binding domain.

The protein belongs to the class-I aminoacyl-tRNA synthetase family. MetG type 1 subfamily. Homodimer. Zn(2+) is required as a cofactor.

The protein resides in the cytoplasm. It carries out the reaction tRNA(Met) + L-methionine + ATP = L-methionyl-tRNA(Met) + AMP + diphosphate. In terms of biological role, is required not only for elongation of protein synthesis but also for the initiation of all mRNA translation through initiator tRNA(fMet) aminoacylation. The sequence is that of Methionine--tRNA ligase from Histophilus somni (strain 2336) (Haemophilus somnus).